The chain runs to 767 residues: Protein SQS1 (767 aa).

Residues 1–17 show a composition bias toward basic residues; that stretch reads MAKRHSHYQGSRRRHAR. The disordered stretch occupies residues 1 to 60; the sequence is MAKRHSHYQGSRRRHARGSNSKKAGRGNAKGIQGRKIKKKPTPTNSWHNSSIPLGEGDLD. A compositionally biased stretch (polar residues) spans 42–52; sequence TPTNSWHNSSI. Phosphoserine is present on serine 105. Residues 176–185 show a composition bias toward acidic residues; sequence EDSENEDDDS. Residues 176–200 are disordered; the sequence is EDSENEDDDSQNSPSTDHSLSSNES. A phosphoserine mark is found at serine 217, serine 255, serine 334, serine 343, and serine 345. The interval 466–493 is disordered; it reads YSDIPISDSSDEGDSYEGDSYEDDEDMA. The segment covering 474–492 has biased composition (acidic residues); the sequence is SSDEGDSYEGDSYEDDEDM. The R3H domain maps to 594–656; that stretch reads GLHIQNIKDE…HTSVVVEKIK (63 aa). The G-patch domain maps to 720-767; the sequence is NENIGRRMLEKLGWKSGEGLGIQGNKGISEPIFAKIKKNRSGLRHSES.

This sequence belongs to the SQS1 family.

Its subcellular location is the cytoplasm. The protein localises to the nucleus. Functionally, may be involved in splicing since overexpression antagonizes the suppression of splicing defects by SPP382 mutants. This is Protein SQS1 (SQS1) from Saccharomyces cerevisiae (strain YJM789) (Baker's yeast).